The chain runs to 129 residues: Small ribosomal subunit protein uS11 (129 aa).

This sequence belongs to the universal ribosomal protein uS11 family. As to quaternary structure, part of the 30S ribosomal subunit. Interacts with proteins S7 and S18. Binds to IF-3.

In terms of biological role, located on the platform of the 30S subunit, it bridges several disparate RNA helices of the 16S rRNA. Forms part of the Shine-Dalgarno cleft in the 70S ribosome. This is Small ribosomal subunit protein uS11 from Salmonella newport (strain SL254).